The primary structure comprises 2310 residues: Peroxide stress-activated histidine kinase mak2 (2310 aa).

One can recognise a Protein kinase domain in the interval 12–292 (DYAISQLGEF…SATDLCYTIV (281 aa)). Residues 1450 to 1592 (RLGPLLTTVI…LLSQQIAISV (143 aa)) enclose the GAF domain. The region spanning 1760–1986 (NMSHELRTPF…TFWFHVQLRN (227 aa)) is the Histidine kinase domain. Residue H1763 is modified to Phosphohistidine; by autocatalysis. Positions 2180 to 2303 (YALIAEDNLI…QLVNAVREFV (124 aa)) constitute a Response regulatory domain. D2232 is subject to 4-aspartylphosphate.

It localises to the cytoplasm. It catalyses the reaction ATP + protein L-histidine = ADP + protein N-phospho-L-histidine.. In terms of biological role, involved in the control of the SAPK-dependent transcriptional response to peroxide stress. Regulates sty1 activity. The protein is Peroxide stress-activated histidine kinase mak2 (mak2) of Schizosaccharomyces pombe (strain 972 / ATCC 24843) (Fission yeast).